The following is a 261-amino-acid chain: MKKPVVLRGQNLSLQFASRQVLKQIDVAFCAGEVVALLGPNGAGKSSLLKLLSGEITSSQSIEYFGKAAKSWRSAALSRHLGLLPQSSSLTFPFLAREVVELGAIPLALSQAEVKAIAEKYMAITDVVHLADSLYPALSGGEKQRLHFARVLTQLDQSGDKKILMLDEPTSALDLAHQHNTLRVAKQFAKEQNACVIVVLHDLNLAAQYADRMVILHRGEIVVDASPEEALTPEIIDAVYGYKALIGRHPTLDFPLVQPAA.

The ABC transporter domain occupies 7–243 (LRGQNLSLQF…EIIDAVYGYK (237 aa)). 39 to 46 (GPNGAGKS) provides a ligand contact to ATP.

Belongs to the ABC transporter superfamily. Heme (hemin) importer (TC 3.A.1.14.5) family. In terms of assembly, the complex is composed of two ATP-binding proteins (HmuV), two transmembrane proteins (HmuU) and a solute-binding protein (HmuT).

It is found in the cell inner membrane. Functionally, part of the ABC transporter complex HmuTUV involved in hemin import. Responsible for energy coupling to the transport system. This Vibrio vulnificus (strain YJ016) protein is Hemin import ATP-binding protein HmuV.